A 65-amino-acid chain; its full sequence is Large ribosomal subunit protein uL29 (65 aa).

It belongs to the universal ribosomal protein uL29 family.

In Bacteroides fragilis (strain ATCC 25285 / DSM 2151 / CCUG 4856 / JCM 11019 / LMG 10263 / NCTC 9343 / Onslow / VPI 2553 / EN-2), this protein is Large ribosomal subunit protein uL29.